Consider the following 609-residue polypeptide: Glutamine--fructose-6-phosphate aminotransferase [isomerizing] (609 aa).

The active-site Nucleophile; for GATase activity is the C2. One can recognise a Glutamine amidotransferase type-2 domain in the interval 2–219 (CGIVGYIGGR…DGECARLTRD (218 aa)). SIS domains lie at 285–424 (SSDL…LRGT) and 458–599 (LARE…VDQP). Catalysis depends on K604, which acts as the For Fru-6P isomerization activity.

In terms of assembly, homodimer.

Its subcellular location is the cytoplasm. It carries out the reaction D-fructose 6-phosphate + L-glutamine = D-glucosamine 6-phosphate + L-glutamate. Functionally, catalyzes the first step in hexosamine metabolism, converting fructose-6P into glucosamine-6P using glutamine as a nitrogen source. The protein is Glutamine--fructose-6-phosphate aminotransferase [isomerizing] of Gloeobacter violaceus (strain ATCC 29082 / PCC 7421).